Consider the following 320-residue polypeptide: o-succinylbenzoate synthase (320 aa).

Catalysis depends on lysine 133, which acts as the Proton donor. Positions 161, 190, and 213 each coordinate Mg(2+). The active-site Proton acceptor is lysine 235.

It belongs to the mandelate racemase/muconate lactonizing enzyme family. MenC type 1 subfamily. A divalent metal cation is required as a cofactor.

It carries out the reaction (1R,6R)-6-hydroxy-2-succinyl-cyclohexa-2,4-diene-1-carboxylate = 2-succinylbenzoate + H2O. It functions in the pathway quinol/quinone metabolism; 1,4-dihydroxy-2-naphthoate biosynthesis; 1,4-dihydroxy-2-naphthoate from chorismate: step 4/7. Its pathway is quinol/quinone metabolism; menaquinone biosynthesis. In terms of biological role, converts 2-succinyl-6-hydroxy-2,4-cyclohexadiene-1-carboxylate (SHCHC) to 2-succinylbenzoate (OSB). This is o-succinylbenzoate synthase from Salmonella paratyphi C (strain RKS4594).